The following is a 476-amino-acid chain: ATP synthase subunit beta (476 aa).

152 to 159 contacts ATP; sequence GGAGVGKT.

Belongs to the ATPase alpha/beta chains family. In terms of assembly, F-type ATPases have 2 components, CF(1) - the catalytic core - and CF(0) - the membrane proton channel. CF(1) has five subunits: alpha(3), beta(3), gamma(1), delta(1), epsilon(1). CF(0) has three main subunits: a(1), b(2) and c(9-12). The alpha and beta chains form an alternating ring which encloses part of the gamma chain. CF(1) is attached to CF(0) by a central stalk formed by the gamma and epsilon chains, while a peripheral stalk is formed by the delta and b chains.

The protein resides in the cell inner membrane. It carries out the reaction ATP + H2O + 4 H(+)(in) = ADP + phosphate + 5 H(+)(out). Functionally, produces ATP from ADP in the presence of a proton gradient across the membrane. The catalytic sites are hosted primarily by the beta subunits. This chain is ATP synthase subunit beta, found in Granulibacter bethesdensis (strain ATCC BAA-1260 / CGDNIH1).